The chain runs to 453 residues: Omega-3 fatty acid desaturase, chloroplastic (453 aa).

Positions 171-175 (HDCGH) match the Histidine box-1 motif. The Histidine box-2 motif lies at 207–211 (HRTHH). The Histidine box-3 signature appears at 374-378 (HVIHH).

Belongs to the fatty acid desaturase type 1 family.

It is found in the plastid. Its subcellular location is the chloroplast membrane. Its pathway is lipid metabolism; polyunsaturated fatty acid biosynthesis. Its function is as follows. Chloroplast omega-3 fatty acid desaturase introduces the third double bond in the biosynthesis of 16:3 and 18:3 fatty acids, important constituents of plant membranes. It is thought to use ferredoxin as an electron donor and to act on fatty acids esterified to galactolipids, sulfolipids and phosphatidylglycerol. This Glycine max (Soybean) protein is Omega-3 fatty acid desaturase, chloroplastic (FAD7).